Consider the following 310-residue polypeptide: Hairy/enhancer-of-split related with YRPW motif-like protein (310 aa).

Positions 1–21 (MKRPHDYSSPDSDTDELIDVG) are disordered. Residues 12–21 (SDTDELIDVG) show a composition bias toward acidic residues. In terms of domain architecture, bHLH spans 43-98 (ARKKRRGIIEKRRRDRINHSLSELRRLVPSAFEKQGSSKLEKAEILQMTVDHLKLL). Residues 116–152 (YRTLGFRECVGEVVRYLSSLEGVESSDPIGARLVSHL) form the Orange domain. 2 stretches are compositionally biased toward low complexity: residues 182 to 192 (LQAASPPASST) and 261 to 273 (PSSS…SSPP). Disordered stretches follow at residues 182–208 (LQAA…HGTA) and 248–310 (HRLQ…IGAF). The segment covering 293–302 (LSSSSKSAQA) has biased composition (polar residues).

This sequence belongs to the HEY family.

Its subcellular location is the nucleus. Functionally, transcriptional repressor which functions as a downstream effector of Notch signaling. The protein is Hairy/enhancer-of-split related with YRPW motif-like protein (heyl) of Danio rerio (Zebrafish).